We begin with the raw amino-acid sequence, 324 residues long: Lactonase drp35 (324 aa).

Ca(2+)-binding residues include glutamate 47, serine 109, glycine 111, aspartate 129, threonine 132, tyrosine 134, aspartate 137, asparagine 184, aspartate 235, and serine 236. Aspartate 235 acts as the Proton donor in catalysis.

It belongs to the SMP-30/CGR1 family. Ca(2+) serves as cofactor.

The protein localises to the cytoplasm. Its function is as follows. Exhibits lactonase activity. Acts in cells with perturbed membrane integrity and is possibly related to the membrane homeostasis. In Staphylococcus aureus (strain MRSA252), this protein is Lactonase drp35 (drp35).